A 449-amino-acid chain; its full sequence is Naphthalene 1,2-dioxygenase system, large oxygenase component (449 aa).

The region spanning 39-137 is the Rieske domain; sequence WLFLTHDSLI…LDKKCMGLKE (99 aa). [2Fe-2S] cluster-binding residues include C81, H83, C101, and H104. The Fe cation site is built by H208, H213, and D362.

This sequence belongs to the bacterial ring-hydroxylating dioxygenase alpha subunit family. In terms of assembly, the naphthalene dioxygenase (NDO) multicomponent enzyme system is composed of an electron transfer component and a dioxygenase component (iron sulfur protein (ISP)). The electron transfer component is composed of a ferredoxin reductase (NdoR) and a ferredoxin (NdoA), and the dioxygenase component is formed of a heterohexamer (trimer of heterodimers) of three large alpha subunits (NdoB) and three small beta subunits (NdoC). Requires [2Fe-2S] cluster as cofactor. Fe(2+) is required as a cofactor.

It carries out the reaction naphthalene + NADH + O2 + H(+) = (1R,2S)-1,2-dihydronaphthalene-1,2-diol + NAD(+). Its pathway is aromatic compound metabolism; naphthalene degradation. Component of the naphthalene dioxygenase (NDO) multicomponent enzyme system which catalyzes the incorporation of both atoms of molecular oxygen into naphthalene to form cis-(1R,2S)-dihydroxy-1,2-dihydronaphthalene. The alpha subunit has a catalytic role in the holoenzyme. The protein is Naphthalene 1,2-dioxygenase system, large oxygenase component of Pseudomonas aeruginosa.